A 311-amino-acid polypeptide reads, in one-letter code: MDVRQRLISSMVISLGLTIISEGIVLIGIASLLHISLFFIFPALVIFWLFQWIISPYVVGRGGYEVSPNDPQYGWLYNLVRRIAEESKIKPPRVFVIDAPYPNAFAYGNRLGGMRVGITLPLLNILDVDELTAVIAHEVGHIKHRDVEIGMTIGLIPTVLGYISTLLMNFGYLALFLAADEIELLFAIAALAIGFVIFVVTFILQIFVLWFNRLRESYADYNSFLVLGEGSKALATALAKIEIYMQNIRIDPFTGIIVTAPPVKVEEKDPHLLVEQWLRTKVSAFKDILSTHPYPARRAQMIYRLIYGSNI.

Helical transmembrane passes span 12-32 (VISL…IASL) and 35-55 (ISLF…WIIS). Residue His-137 coordinates Zn(2+). The active site involves Glu-138. Zn(2+) is bound at residue His-141. Transmembrane regions (helical) follow at residues 159–179 (VLGY…FLAA) and 184–204 (LLFA…TFIL). Glu-216 contributes to the Zn(2+) binding site.

It belongs to the peptidase M48B family. It depends on Zn(2+) as a cofactor.

The protein resides in the cell membrane. This chain is Protease HtpX homolog 1, found in Saccharolobus solfataricus (strain ATCC 35092 / DSM 1617 / JCM 11322 / P2) (Sulfolobus solfataricus).